The following is a 169-amino-acid chain: Der GTPase-activating protein YihI (169 aa).

Disordered regions lie at residues 1 to 98 and 144 to 169; these read MKPS…PQAE and GLSY…LRGN. Residues 10–19 show a composition bias toward basic residues; that stretch reads SKGHAKARRK. Positions 20–30 are enriched in basic and acidic residues; sequence TREELDQEARD. The span at 31–40 shows a compositional bias: basic residues; that stretch reads RKRQKKRRGH. The segment covering 49 to 58 has biased composition (polar residues); sequence GNTTSGSKGQ. The span at 147–159 shows a compositional bias: acidic residues; that stretch reads YDDDEEEEEDEKQ. The segment covering 160–169 has biased composition (basic and acidic residues); the sequence is EDMMRLLRGN.

The protein belongs to the YihI family. As to quaternary structure, interacts with Der.

Functionally, a GTPase-activating protein (GAP) that modifies Der/EngA GTPase function. May play a role in ribosome biogenesis. In Escherichia coli O139:H28 (strain E24377A / ETEC), this protein is Der GTPase-activating protein YihI.